A 198-amino-acid polypeptide reads, in one-letter code: MASGNAHIGKPAPDFTGTAVVDGAFKEIKLSDYRGKYVVLFFYPLDFTFVCPTEIIAFSDHAEDFRKLGCEVLGVSVDSQFTHLAWINTPRKEGGLGPLNIPLLADVTKSLSQNYGVLKNDEGIAYRGLFIIDAKGVLRQITVNDLPVGRSVDEALRLVQAFQYTDEHGEVCPAGWKPGSDTIKPNVDDSKEYFSKHN.

Position 2 is an N-acetylalanine (Ala-2). One can recognise a Thioredoxin domain in the interval 6-164 (AHIGKPAPDF…ALRLVQAFQY (159 aa)). Cys-51 serves as the catalytic Cysteine sulfenic acid (-SOH) intermediate. Ser-112 bears the Phosphoserine mark. Thr-182 bears the Phosphothreonine mark. Lys-196 is subject to N6-acetyllysine.

Belongs to the peroxiredoxin family. AhpC/Prx1 subfamily. In terms of assembly, homodimer; disulfide-linked, upon oxidation. 5 homodimers assemble to form a ring-like decamer. Interacts with TIPIN. The enzyme can be inactivated by further oxidation of the cysteine sulfenic acid (C(P)-SOH) to sulphinic acid (C(P)-SO2H) instead of its condensation to a disulfide bond. It can be reactivated by forming a transient disulfide bond with sulfiredoxin SRXN1, which reduces the cysteine sulfinic acid in an ATP- and Mg-dependent manner. Post-translationally, acetylation increases resistance to transition to high molecular-mass complexes. Deacetylated by HDAC6 which decreases reducing activity.

It is found in the cytoplasm. It catalyses the reaction a hydroperoxide + [thioredoxin]-dithiol = an alcohol + [thioredoxin]-disulfide + H2O. In terms of biological role, thiol-specific peroxidase that catalyzes the reduction of hydrogen peroxide and organic hydroperoxides to water and alcohols, respectively. Plays a role in cell protection against oxidative stress by detoxifying peroxides and as sensor of hydrogen peroxide-mediated signaling events. Might participate in the signaling cascades of growth factors and tumor necrosis factor-alpha by regulating the intracellular concentrations of H(2)O(2). This chain is Peroxiredoxin-2 (Prdx2), found in Rattus norvegicus (Rat).